A 75-amino-acid polypeptide reads, in one-letter code: Large ribosomal subunit protein bL28c (75 aa).

This sequence belongs to the bacterial ribosomal protein bL28 family.

It is found in the plastid. It localises to the chloroplast. The chain is Large ribosomal subunit protein bL28c from Cyanidioschyzon merolae (strain NIES-3377 / 10D) (Unicellular red alga).